The following is a 473-amino-acid chain: UDP-glycosyltransferase 71B1 (473 aa).

H15 acts as the Proton acceptor in catalysis. An an anthocyanidin-binding site is contributed by H15. D110 (charge relay) is an active-site residue. UDP-alpha-D-glucose-binding residues include T132, A342, Q344, H359, W362, N363, S364, and E367. A382 contacts an anthocyanidin. E383 and Q384 together coordinate UDP-alpha-D-glucose.

Belongs to the UDP-glycosyltransferase family.

The enzyme catalyses a flavonol + UDP-alpha-D-glucose = a flavonol 3-O-beta-D-glucoside + UDP + H(+). Functionally, possesses quercetin 3-O-glucosyltransferase activity in vitro. Also active in vitro on benzoates and benzoate derivatives. This is UDP-glycosyltransferase 71B1 (UGT71B1) from Arabidopsis thaliana (Mouse-ear cress).